Here is a 568-residue protein sequence, read N- to C-terminus: Cytochrome P450 monooxygenase 41 (568 aa).

Residues 21–41 (LTSLVPLILSVMVCLIATVTI) form a helical membrane-spanning segment. Asparagine 321 and asparagine 377 each carry an N-linked (GlcNAc...) asparagine glycan. Cysteine 514 is a binding site for heme.

The protein belongs to the cytochrome P450 family. Heme is required as a cofactor.

The protein localises to the membrane. It functions in the pathway secondary metabolite biosynthesis. Its function is as follows. Cytochrome P450 monooxygenase that is able to use 3,5-dimethoxy-trans-stilbene and 3,5,4'-trimethoxy-trans-stilbene as substrates for oxidation. The sequence is that of Cytochrome P450 monooxygenase 41 from Postia placenta (strain ATCC 44394 / Madison 698-R) (Brown rot fungus).